Here is a 440-residue protein sequence, read N- to C-terminus: 2-methylisoborneol synthase (440 aa).

2 disordered regions span residues 1 to 33 (MPDS…IPSA) and 46 to 74 (LHPP…TVTG). Composition is skewed to pro residues over residues 9–29 (TPPP…PAPV) and 50–63 (VTVP…PPAP). Mg(2+) contacts are provided by Asp-197, Asp-198, Glu-202, Asn-345, Ser-349, and Glu-353.

This sequence belongs to the terpene synthase family. 2-methylisoborneol synthase subfamily. It depends on Mg(2+) as a cofactor.

It carries out the reaction (E)-2-methylgeranyl diphosphate + H2O = 2-methylisoborneol + diphosphate. Its function is as follows. Catalyzes the cyclization of 2-methylgeranyl diphosphate (2-MeGPP) to 2-methylisoborneol (2-MIB), which likely involves the intermediacy of 2-methyllinalyl diphosphate. Is also able to catalyze the cyclization of geranyl diphosphate (GPP), albeit with much lower efficiency, leading to the formation of a complex mixture of cyclic monoterpenes, consisting of alpha-pinene (6%), beta-pinene (23%), limonene (32%), gamma-terpinene (29%), and delta-terpinene (10%). This chain is 2-methylisoborneol synthase, found in Streptomyces coelicolor (strain ATCC BAA-471 / A3(2) / M145).